The chain runs to 60 residues: Large ribosomal subunit protein bL32 (60 aa).

Basic residues predominate over residues 1-16 (MPNPKRRHSKKRTSTR). Positions 1 to 28 (MPNPKRRHSKKRTSTRRAHDALKQPGLS) are disordered.

It belongs to the bacterial ribosomal protein bL32 family.

The chain is Large ribosomal subunit protein bL32 from Solibacter usitatus (strain Ellin6076).